Reading from the N-terminus, the 243-residue chain is Urease accessory protein UreF 2 (243 aa).

This sequence belongs to the UreF family. In terms of assembly, ureD, UreF and UreG form a complex that acts as a GTP-hydrolysis-dependent molecular chaperone, activating the urease apoprotein by helping to assemble the nickel containing metallocenter of UreC. The UreE protein probably delivers the nickel.

It localises to the cytoplasm. In terms of biological role, required for maturation of urease via the functional incorporation of the urease nickel metallocenter. Functionally, disrupting the ure2 operon has no effect on urease activity or pathogen survival in BALB/c mice when administered orally. The polypeptide is Urease accessory protein UreF 2 (Brucella abortus (strain 2308)).